The sequence spans 541 residues: Membrane protein insertase YidC (541 aa).

The next 5 membrane-spanning stretches (helical) occupy residues 6-26 (NILL…WQAD), 349-369 (FVGN…GLLF), 420-440 (GGCL…WVLL), 457-477 (LSVQ…MFVM), and 500-520 (MIFT…WLVG).

The protein belongs to the OXA1/ALB3/YidC family. Type 1 subfamily. Interacts with the Sec translocase complex via SecD. Specifically interacts with transmembrane segments of nascent integral membrane proteins during membrane integration.

Its subcellular location is the cell inner membrane. Required for the insertion and/or proper folding and/or complex formation of integral membrane proteins into the membrane. Involved in integration of membrane proteins that insert both dependently and independently of the Sec translocase complex, as well as at least some lipoproteins. Aids folding of multispanning membrane proteins. The protein is Membrane protein insertase YidC of Shewanella sp. (strain ANA-3).